Here is a 128-residue protein sequence, read N- to C-terminus: Large ribosomal subunit protein bL17 (128 aa).

This sequence belongs to the bacterial ribosomal protein bL17 family. As to quaternary structure, part of the 50S ribosomal subunit. Contacts protein L32.

The chain is Large ribosomal subunit protein bL17 from Klebsiella pneumoniae (strain 342).